Consider the following 343-residue polypeptide: N-acetyl-gamma-glutamyl-phosphate reductase (343 aa).

Cysteine 149 is an active-site residue.

It belongs to the NAGSA dehydrogenase family. Type 1 subfamily.

It localises to the cytoplasm. The enzyme catalyses N-acetyl-L-glutamate 5-semialdehyde + phosphate + NADP(+) = N-acetyl-L-glutamyl 5-phosphate + NADPH + H(+). Its pathway is amino-acid biosynthesis; L-arginine biosynthesis; N(2)-acetyl-L-ornithine from L-glutamate: step 3/4. In terms of biological role, catalyzes the NADPH-dependent reduction of N-acetyl-5-glutamyl phosphate to yield N-acetyl-L-glutamate 5-semialdehyde. This Methanococcus maripaludis (strain C5 / ATCC BAA-1333) protein is N-acetyl-gamma-glutamyl-phosphate reductase.